The sequence spans 892 residues: Alanine--tRNA ligase (892 aa).

4 residues coordinate Zn(2+): His593, His597, Cys694, and His698.

This sequence belongs to the class-II aminoacyl-tRNA synthetase family. Requires Zn(2+) as cofactor.

It is found in the cytoplasm. The enzyme catalyses tRNA(Ala) + L-alanine + ATP = L-alanyl-tRNA(Ala) + AMP + diphosphate. Functionally, catalyzes the attachment of alanine to tRNA(Ala) in a two-step reaction: alanine is first activated by ATP to form Ala-AMP and then transferred to the acceptor end of tRNA(Ala). Also edits incorrectly charged Ser-tRNA(Ala) and Gly-tRNA(Ala) via its editing domain. This Helicobacter hepaticus (strain ATCC 51449 / 3B1) protein is Alanine--tRNA ligase.